Here is a 471-residue protein sequence, read N- to C-terminus: Chromosomal replication initiator protein DnaA (471 aa).

The domain I, interacts with DnaA modulators stretch occupies residues 1 to 77 (MELNSSFWTL…YTEISDTYGK (77 aa)). The interval 77–130 (KPFEVEFSITGNKINSHIETSTTPDEVLSGSEILQAQLARAQNIQPTQPRSSSD) is domain II. The interval 131-349 (TLNSELTFST…GNLKKVKMFS (219 aa)) is domain III, AAA+ region. 4 residues coordinate ATP: Gly-176, Gly-178, Lys-179, and Thr-180. Positions 350 to 471 (ELQGLPIDHE…EQRIHNITRV (122 aa)) are domain IV, binds dsDNA.

It belongs to the DnaA family. In terms of assembly, oligomerizes as a right-handed, spiral filament on DNA at oriC.

Its subcellular location is the cytoplasm. Plays an essential role in the initiation and regulation of chromosomal replication. ATP-DnaA binds to the origin of replication (oriC) to initiate formation of the DNA replication initiation complex once per cell cycle. Binds the DnaA box (a 9 base pair repeat at the origin) and separates the double-stranded (ds)DNA. Forms a right-handed helical filament on oriC DNA; dsDNA binds to the exterior of the filament while single-stranded (ss)DNA is stabiized in the filament's interior. The ATP-DnaA-oriC complex binds and stabilizes one strand of the AT-rich DNA unwinding element (DUE), permitting loading of DNA polymerase. After initiation quickly degrades to an ADP-DnaA complex that is not apt for DNA replication. Binds acidic phospholipids. The polypeptide is Chromosomal replication initiator protein DnaA (Bdellovibrio bacteriovorus (strain ATCC 15356 / DSM 50701 / NCIMB 9529 / HD100)).